A 128-amino-acid polypeptide reads, in one-letter code: Fluoride-specific ion channel FluC (128 aa).

The next 4 helical transmembrane spans lie at 5-25 (IVAI…LSIG), 35-55 (LGTL…VVAF), 67-87 (LFVI…SVEV), and 96-116 (FGWA…LTGL). Positions 75 and 78 each coordinate Na(+).

Belongs to the fluoride channel Fluc/FEX (TC 1.A.43) family.

It is found in the cell inner membrane. It catalyses the reaction fluoride(in) = fluoride(out). Its activity is regulated as follows. Na(+) is not transported, but it plays an essential structural role and its presence is essential for fluoride channel function. In terms of biological role, fluoride-specific ion channel. Important for reducing fluoride concentration in the cell, thus reducing its toxicity. The sequence is that of Fluoride-specific ion channel FluC from Burkholderia thailandensis (strain ATCC 700388 / DSM 13276 / CCUG 48851 / CIP 106301 / E264).